The primary structure comprises 324 residues: Biotin synthase (324 aa).

One can recognise a Radical SAM core domain in the interval 50-278; it reads HAGPAFTCAI…QADILVAGGR (229 aa). 3 residues coordinate [4Fe-4S] cluster: C67, C71, and C74. 2 residues coordinate [2Fe-2S] cluster: C143 and C203.

Belongs to the radical SAM superfamily. Biotin synthase family. As to quaternary structure, homodimer. It depends on [4Fe-4S] cluster as a cofactor. [2Fe-2S] cluster is required as a cofactor.

The enzyme catalyses (4R,5S)-dethiobiotin + (sulfur carrier)-SH + 2 reduced [2Fe-2S]-[ferredoxin] + 2 S-adenosyl-L-methionine = (sulfur carrier)-H + biotin + 2 5'-deoxyadenosine + 2 L-methionine + 2 oxidized [2Fe-2S]-[ferredoxin]. The protein operates within cofactor biosynthesis; biotin biosynthesis; biotin from 7,8-diaminononanoate: step 2/2. Catalyzes the conversion of dethiobiotin (DTB) to biotin by the insertion of a sulfur atom into dethiobiotin via a radical-based mechanism. The protein is Biotin synthase of Oleidesulfovibrio alaskensis (strain ATCC BAA-1058 / DSM 17464 / G20) (Desulfovibrio alaskensis).